The following is a 397-amino-acid chain: CCA-adding enzyme (397 aa).

2 residues coordinate ATP: glycine 26 and arginine 29. Positions 26 and 29 each coordinate CTP. 2 residues coordinate Mg(2+): aspartate 39 and aspartate 41. ATP-binding residues include arginine 110, aspartate 153, arginine 156, arginine 159, and arginine 162. Positions 110, 153, 156, 159, and 162 each coordinate CTP.

Belongs to the tRNA nucleotidyltransferase/poly(A) polymerase family. Bacterial CCA-adding enzyme type 3 subfamily. Homodimer. Requires Mg(2+) as cofactor.

The catalysed reaction is a tRNA precursor + 2 CTP + ATP = a tRNA with a 3' CCA end + 3 diphosphate. The enzyme catalyses a tRNA with a 3' CCA end + 2 CTP + ATP = a tRNA with a 3' CCACCA end + 3 diphosphate. In terms of biological role, catalyzes the addition and repair of the essential 3'-terminal CCA sequence in tRNAs without using a nucleic acid template. Adds these three nucleotides in the order of C, C, and A to the tRNA nucleotide-73, using CTP and ATP as substrates and producing inorganic pyrophosphate. tRNA 3'-terminal CCA addition is required both for tRNA processing and repair. Also involved in tRNA surveillance by mediating tandem CCA addition to generate a CCACCA at the 3' terminus of unstable tRNAs. While stable tRNAs receive only 3'-terminal CCA, unstable tRNAs are marked with CCACCA and rapidly degraded. This is CCA-adding enzyme from Bacillus cereus (strain ZK / E33L).